The following is a 163-amino-acid chain: Transcription elongation factor GreB (163 aa).

The stretch at 54 to 76 (GKRRMREIDRRIRFLTKRLEAAV) forms a coiled coil.

It belongs to the GreA/GreB family. GreB subfamily.

Necessary for efficient RNA polymerase transcription elongation past template-encoded arresting sites. The arresting sites in DNA have the property of trapping a certain fraction of elongating RNA polymerases that pass through, resulting in locked ternary complexes. Cleavage of the nascent transcript by cleavage factors such as GreA or GreB allows the resumption of elongation from the new 3'terminus. GreB releases sequences of up to 9 nucleotides in length. This is Transcription elongation factor GreB from Neisseria meningitidis serogroup B (strain ATCC BAA-335 / MC58).